Here is a 351-residue protein sequence, read N- to C-terminus: Small ribosomal subunit biogenesis GTPase RsgA (351 aa).

One can recognise a CP-type G domain in the interval 107-277 (ENLLQRPDNF…LIDSPGIREF (171 aa)). Residues 163–166 (NKTD) and 219–227 (GQSGVGKSS) contribute to the GTP site. Zn(2+) contacts are provided by C301, C306, H308, and C314.

Belongs to the TRAFAC class YlqF/YawG GTPase family. RsgA subfamily. As to quaternary structure, monomer. Associates with 30S ribosomal subunit, binds 16S rRNA. The cofactor is Zn(2+).

It localises to the cytoplasm. Its function is as follows. One of several proteins that assist in the late maturation steps of the functional core of the 30S ribosomal subunit. Helps release RbfA from mature subunits. May play a role in the assembly of ribosomal proteins into the subunit. Circularly permuted GTPase that catalyzes slow GTP hydrolysis, GTPase activity is stimulated by the 30S ribosomal subunit. The polypeptide is Small ribosomal subunit biogenesis GTPase RsgA (Marinobacter nauticus (strain ATCC 700491 / DSM 11845 / VT8) (Marinobacter aquaeolei)).